Here is a 563-residue protein sequence, read N- to C-terminus: Inositol-3-phosphate synthase 1-B (563 aa).

The protein belongs to the myo-inositol 1-phosphate synthase family. Requires NAD(+) as cofactor.

Its subcellular location is the cytoplasm. It catalyses the reaction D-glucose 6-phosphate = 1D-myo-inositol 3-phosphate. Its pathway is polyol metabolism; myo-inositol biosynthesis; myo-inositol from D-glucose 6-phosphate: step 1/2. In terms of biological role, key enzyme in myo-inositol biosynthesis pathway that catalyzes the conversion of glucose 6-phosphate to 1-myo-inositol 1-phosphate in a NAD-dependent manner. Rate-limiting enzyme in the synthesis of all inositol-containing compounds. The sequence is that of Inositol-3-phosphate synthase 1-B (isyna1-b) from Xenopus laevis (African clawed frog).